The following is a 349-amino-acid chain: Thiamine-phosphate synthase (349 aa).

Residues Met1–Gly125 are unknown. Residues Arg63–Ser85 are disordered. A thiamine-phosphate synthase region spans residues Leu126 to Leu349. Residues Gln177–Lys181 and Asn209 contribute to the 4-amino-2-methyl-5-(diphosphooxymethyl)pyrimidine site. Residues Asp210 and Asp229 each coordinate Mg(2+). 4-amino-2-methyl-5-(diphosphooxymethyl)pyrimidine contacts are provided by Ser248 and Lys277. Gly304 contacts 2-[(2R,5Z)-2-carboxy-4-methylthiazol-5(2H)-ylidene]ethyl phosphate.

It belongs to the thiamine-phosphate synthase family. The cofactor is Mg(2+).

The enzyme catalyses 2-[(2R,5Z)-2-carboxy-4-methylthiazol-5(2H)-ylidene]ethyl phosphate + 4-amino-2-methyl-5-(diphosphooxymethyl)pyrimidine + 2 H(+) = thiamine phosphate + CO2 + diphosphate. It carries out the reaction 2-(2-carboxy-4-methylthiazol-5-yl)ethyl phosphate + 4-amino-2-methyl-5-(diphosphooxymethyl)pyrimidine + 2 H(+) = thiamine phosphate + CO2 + diphosphate. The catalysed reaction is 4-methyl-5-(2-phosphooxyethyl)-thiazole + 4-amino-2-methyl-5-(diphosphooxymethyl)pyrimidine + H(+) = thiamine phosphate + diphosphate. Its pathway is cofactor biosynthesis; thiamine diphosphate biosynthesis; thiamine phosphate from 4-amino-2-methyl-5-diphosphomethylpyrimidine and 4-methyl-5-(2-phosphoethyl)-thiazole: step 1/1. Functionally, condenses 4-methyl-5-(beta-hydroxyethyl)thiazole monophosphate (THZ-P) and 2-methyl-4-amino-5-hydroxymethyl pyrimidine pyrophosphate (HMP-PP) to form thiamine monophosphate (TMP). The sequence is that of Thiamine-phosphate synthase from Parasynechococcus marenigrum (strain WH8102).